Here is a 318-residue protein sequence, read N- to C-terminus: MYNYLDFEKPVADLDVQILELKKIAQEKGSLDMSDEIARLEMRSQTALRDLYKKLSPWQKTQVARHPDRPHFMDYSAQLLRDVTPLAGDRKFAEDEAIQAGFARFKGEAIAYIGQEKGHDTQTRLRYNFGSARPEGYRKAVRIMELADRFGLPLLTFVDTAGAYPGVSAEERGQAEAIAQSTAATLRLRVPVVSVIIGEGGSGGAIAIAAANKVYMLEHSIYSVISPEGAASILWRDPARAKDAATNMQITAQDLYRLKIIDGIIPEPLGGAHRQKEAAIEAAGDGIAAALKSMIGKDGETIKQERWDKYLQIGRSLA.

The CoA carboxyltransferase C-terminal domain occupies 43 to 293 (RSQTALRDLY…GDGIAAALKS (251 aa)).

This sequence belongs to the AccA family. Acetyl-CoA carboxylase is a heterohexamer composed of biotin carboxyl carrier protein (AccB), biotin carboxylase (AccC) and two subunits each of ACCase subunit alpha (AccA) and ACCase subunit beta (AccD).

Its subcellular location is the cytoplasm. It catalyses the reaction N(6)-carboxybiotinyl-L-lysyl-[protein] + acetyl-CoA = N(6)-biotinyl-L-lysyl-[protein] + malonyl-CoA. Its pathway is lipid metabolism; malonyl-CoA biosynthesis; malonyl-CoA from acetyl-CoA: step 1/1. In terms of biological role, component of the acetyl coenzyme A carboxylase (ACC) complex. First, biotin carboxylase catalyzes the carboxylation of biotin on its carrier protein (BCCP) and then the CO(2) group is transferred by the carboxyltransferase to acetyl-CoA to form malonyl-CoA. The sequence is that of Acetyl-coenzyme A carboxylase carboxyl transferase subunit alpha from Bartonella bacilliformis (strain ATCC 35685 / KC583 / Herrer 020/F12,63).